Here is a 138-residue protein sequence, read N- to C-terminus: Acidic phospholipase A2 jerdoxin (138 aa).

The signal sequence occupies residues 1–16; sequence MRTLWIMAVLLVGVEG. Disulfide bonds link Cys42-Cys131, Cys44-Cys60, Cys59-Cys111, Cys65-Cys138, Cys66-Cys104, Cys73-Cys97, and Cys91-Cys102. Residues Tyr43, Gly45, and Gly47 each contribute to the Ca(2+) site. Residue His63 is part of the active site. Asp64 contributes to the Ca(2+) binding site. Residue Asp105 is part of the active site.

The protein belongs to the phospholipase A2 family. Group II subfamily. D49 sub-subfamily. As to quaternary structure, monomer. Ca(2+) is required as a cofactor. As to expression, expressed by the venom gland.

Its subcellular location is the secreted. The enzyme catalyses a 1,2-diacyl-sn-glycero-3-phosphocholine + H2O = a 1-acyl-sn-glycero-3-phosphocholine + a fatty acid + H(+). Snake venom phospholipase A2 (PLA2) that displays edema-inducing activities, exhibits indirect hemolytic activity, and inhibits ADP-induced platelet aggregation. PLA2 catalyzes the calcium-dependent hydrolysis of the 2-acyl groups in 3-sn-phosphoglycerides. This is Acidic phospholipase A2 jerdoxin from Protobothrops jerdonii (Jerdon's pitviper).